A 114-amino-acid chain; its full sequence is uncharacterized protein (114 aa).

This is an uncharacterized protein from Acanthamoeba polyphaga mimivirus (APMV).